The primary structure comprises 433 residues: tRNA-queuosine alpha-mannosyltransferase (433 aa).

A disordered region spans residues 194–244 (PAAKSHIQTSSPSSYPDVEPPEKMLNVAGTNQSHEPTSVTPHQETASPLCG). Positions 221-239 (AGTNQSHEPTSVTPHQETA) are enriched in polar residues.

It belongs to the glycosyltransferase group 1 family. Glycosyltransferase 4 subfamily.

The protein localises to the cytoplasm. Its subcellular location is the nucleus. It carries out the reaction queuosine(34) in tRNA(Asp) + GDP-alpha-D-mannose = O-4''-alpha-D-mannosylqueuosine(34) in tRNA(Asp) + GDP + H(+). In terms of biological role, glycosyltransferase that specifically catalyzes mannosylation of cytoplasmic tRNA(Asp) modified with queuosine at position 34 (queuosine(34)). Mannosylates the cyclopentene moiety of queuosine(34) in tRNA(Asp) to form mannosyl-queuosine(34). Mannosylation of queuosine(34) in tRNA(Asp) is required to slow-down elongation at cognate codons, GAC and GAU, thereby regulating protein translation. This is tRNA-queuosine alpha-mannosyltransferase (gtdc1) from Danio rerio (Zebrafish).